The primary structure comprises 375 residues: DNA replication and repair protein RecF (375 aa).

30 to 37 (GENAQGKT) contributes to the ATP binding site.

This sequence belongs to the RecF family.

It localises to the cytoplasm. In terms of biological role, the RecF protein is involved in DNA metabolism; it is required for DNA replication and normal SOS inducibility. RecF binds preferentially to single-stranded, linear DNA. It also seems to bind ATP. The sequence is that of DNA replication and repair protein RecF from Bacillus cereus (strain B4264).